The following is a 205-amino-acid chain: uncharacterized protein (205 aa).

A disordered region spans residues Ala-72 to Arg-114. The segment covering Arg-90 to Leu-100 has biased composition (polar residues). Positions Thr-101–Asp-110 are enriched in low complexity.

This is an uncharacterized protein from Equus caballus (Horse).